The primary structure comprises 408 residues: MSSKKRKSPPQESLTSYFEKSSKSSKKYGSQNKDSDSSSTCLQQKIEIQWSITDSLYIAKYGKLKKTKKFIAFDLDGTLIKTKSGRVFSKDAADWTWWHPSVVPKLKALYQDNYSLVIFSNQNGIPRKPSAGHTFQMKIRAIFESLDLPIVLYAAILKDKFRKPLTGMWNSFLKDVNRSIDLSFIKYVGDAAGRPGDHNSTDLKFAENIGIKFETPEQFFLGHSFVPPNFESFHPKNYLVRNSSSHPYHFKKSEHQEIVVLVGFPSSGKSTLAESQIVTQGYERVNQDILKTKSKCIKAAIEALKKEKSVVIDNTNPTIESRKMWIDIAQEFEIPIRCIHLQSSEELARHNNVFRYIHHNQKQLPEIAFNSFKSRFQMPTVEEGFTNVEEVPFKCLKDYEDTWNYWYE.

The segment at 1-38 (MSSKKRKSPPQESLTSYFEKSSKSSKKYGSQNKDSDSS) is disordered. At Ser8 the chain carries Phosphoserine. Composition is skewed to polar residues over residues 10-19 (PQESLTSYFE) and 28-38 (YGSQNKDSDSS). 263–270 (GFPSSGKS) contacts ATP.

The protein in the N-terminal section; belongs to the DNA 3' phosphatase family.

The protein localises to the nucleus. The enzyme catalyses a 3'end (2'-deoxyribonucleotide 3'-phosphate)-DNA + H2O = a 3'-end 2'-deoxyribonucleotide-DNA + phosphate. The catalysed reaction is a 5'-end dephospho-2'-deoxyribonucleoside-DNA + ATP = a 5'-end 5'-phospho-2'-deoxyribonucleoside-DNA + ADP + H(+). Its function is as follows. Catalyzes the phosphorylation of DNA at 5'-hydroxyl termini and can dephosphorylate its 3'-phosphate termini. Has a role in the repair of breaks in single-stranded DNA. The chain is Bifunctional polynucleotide phosphatase/kinase (pnk1) from Schizosaccharomyces pombe (strain 972 / ATCC 24843) (Fission yeast).